Reading from the N-terminus, the 65-residue chain is UPF0434 protein BRADO0313 (65 aa).

It belongs to the UPF0434 family.

The sequence is that of UPF0434 protein BRADO0313 from Bradyrhizobium sp. (strain ORS 278).